The primary structure comprises 592 residues: A-type ATP synthase subunit A (592 aa).

ATP is bound at residue 234–241 (GPFGSGKT).

Belongs to the ATPase alpha/beta chains family. In terms of assembly, has multiple subunits with at least A(3), B(3), C, D, E, F, H, I and proteolipid K(x).

The protein localises to the cell membrane. The enzyme catalyses ATP + H2O + 4 H(+)(in) = ADP + phosphate + 5 H(+)(out). Functionally, produces ATP from ADP in the presence of a proton gradient across the membrane. The archaeal alpha chain is a catalytic subunit. Its function is as follows. Component of the A-type ATP synthase that produces ATP from ADP in the presence of a proton gradient across the membrane. The A chain is the catalytic subunit. The polypeptide is A-type ATP synthase subunit A (Sulfolobus acidocaldarius (strain ATCC 33909 / DSM 639 / JCM 8929 / NBRC 15157 / NCIMB 11770)).